We begin with the raw amino-acid sequence, 72 residues long: DNA-directed RNA polymerase subunit epsilon (72 aa).

This sequence belongs to the RNA polymerase subunit epsilon family. As to quaternary structure, RNAP is composed of a core of 2 alpha, a beta and a beta' subunit. The core is associated with a delta subunit, and at least one of epsilon or omega. When a sigma factor is associated with the core the holoenzyme is formed, which can initiate transcription.

It catalyses the reaction RNA(n) + a ribonucleoside 5'-triphosphate = RNA(n+1) + diphosphate. Its function is as follows. A non-essential component of RNA polymerase (RNAP). This chain is DNA-directed RNA polymerase subunit epsilon, found in Staphylococcus haemolyticus (strain JCSC1435).